A 386-amino-acid chain; its full sequence is Alanine racemase (386 aa).

The active-site Proton acceptor; specific for D-alanine is Lys-48. An N6-(pyridoxal phosphate)lysine modification is found at Lys-48. Residue Arg-147 participates in substrate binding. The active-site Proton acceptor; specific for L-alanine is Tyr-279. Residue Met-327 participates in substrate binding.

Belongs to the alanine racemase family. Pyridoxal 5'-phosphate serves as cofactor.

It catalyses the reaction L-alanine = D-alanine. It functions in the pathway amino-acid biosynthesis; D-alanine biosynthesis; D-alanine from L-alanine: step 1/1. Catalyzes the interconversion of L-alanine and D-alanine. May also act on other amino acids. This chain is Alanine racemase (alr), found in Prochlorococcus marinus (strain SARG / CCMP1375 / SS120).